We begin with the raw amino-acid sequence, 29 residues long: MKTKFVFDLLAPDDILHPSNHVNLIIRLI.

It belongs to the coronaviruses ns4.9 protein family.

The polypeptide is Truncated non-structural protein of 4.9 kDa (Bovine coronavirus (strain Ontario) (BCoV)).